Reading from the N-terminus, the 228-residue chain is Cytochrome c oxidase subunit 2 (228 aa).

Residues 1–26 are Mitochondrial intermembrane-facing; that stretch reads MSTWANLGLQDSASPLMEQLIFFHDH. The helical transmembrane segment at 27–48 threads the bilayer; sequence ALLILVMITVLVGYLMFMLFFN. The Mitochondrial matrix portion of the chain corresponds to 49–62; sequence NYVNRFLLHGQLIE. A helical transmembrane segment spans residues 63-82; the sequence is MIWTILPAIILLFIALPSLR. Over 83–228 the chain is Mitochondrial intermembrane; sequence LLYLLDEINE…FIKWISSNNS (146 aa). Positions 161, 196, 198, 200, 204, and 207 each coordinate Cu cation. Mg(2+) is bound at residue glutamate 198.

Belongs to the cytochrome c oxidase subunit 2 family. Component of the cytochrome c oxidase (complex IV, CIV), a multisubunit enzyme composed of a catalytic core of 3 subunits and several supernumerary subunits. The complex exists as a monomer or a dimer and forms supercomplexes (SCs) in the inner mitochondrial membrane with ubiquinol-cytochrome c oxidoreductase (cytochrome b-c1 complex, complex III, CIII). The cofactor is Cu cation.

It localises to the mitochondrion inner membrane. It carries out the reaction 4 Fe(II)-[cytochrome c] + O2 + 8 H(+)(in) = 4 Fe(III)-[cytochrome c] + 2 H2O + 4 H(+)(out). Its function is as follows. Component of the cytochrome c oxidase, the last enzyme in the mitochondrial electron transport chain which drives oxidative phosphorylation. The respiratory chain contains 3 multisubunit complexes succinate dehydrogenase (complex II, CII), ubiquinol-cytochrome c oxidoreductase (cytochrome b-c1 complex, complex III, CIII) and cytochrome c oxidase (complex IV, CIV), that cooperate to transfer electrons derived from NADH and succinate to molecular oxygen, creating an electrochemical gradient over the inner membrane that drives transmembrane transport and the ATP synthase. Cytochrome c oxidase is the component of the respiratory chain that catalyzes the reduction of oxygen to water. Electrons originating from reduced cytochrome c in the intermembrane space (IMS) are transferred via the dinuclear copper A center (CU(A)) of subunit 2 and heme A of subunit 1 to the active site in subunit 1, a binuclear center (BNC) formed by heme A3 and copper B (CU(B)). The BNC reduces molecular oxygen to 2 water molecules using 4 electrons from cytochrome c in the IMS and 4 protons from the mitochondrial matrix. The chain is Cytochrome c oxidase subunit 2 (mt:CoII) from Drosophila melanogaster (Fruit fly).